We begin with the raw amino-acid sequence, 372 residues long: 4-hydroxy-3-methylbut-2-en-1-yl diphosphate synthase (flavodoxin) (372 aa).

[4Fe-4S] cluster is bound by residues Cys-270, Cys-273, Cys-305, and Glu-312.

Belongs to the IspG family. Requires [4Fe-4S] cluster as cofactor.

The catalysed reaction is (2E)-4-hydroxy-3-methylbut-2-enyl diphosphate + oxidized [flavodoxin] + H2O + 2 H(+) = 2-C-methyl-D-erythritol 2,4-cyclic diphosphate + reduced [flavodoxin]. Its pathway is isoprenoid biosynthesis; isopentenyl diphosphate biosynthesis via DXP pathway; isopentenyl diphosphate from 1-deoxy-D-xylulose 5-phosphate: step 5/6. Converts 2C-methyl-D-erythritol 2,4-cyclodiphosphate (ME-2,4cPP) into 1-hydroxy-2-methyl-2-(E)-butenyl 4-diphosphate. In Alteromonas mediterranea (strain DSM 17117 / CIP 110805 / LMG 28347 / Deep ecotype), this protein is 4-hydroxy-3-methylbut-2-en-1-yl diphosphate synthase (flavodoxin).